Here is a 148-residue protein sequence, read N- to C-terminus: SsrA-binding protein (148 aa).

Belongs to the SmpB family.

It localises to the cytoplasm. In terms of biological role, required for rescue of stalled ribosomes mediated by trans-translation. Binds to transfer-messenger RNA (tmRNA), required for stable association of tmRNA with ribosomes. tmRNA and SmpB together mimic tRNA shape, replacing the anticodon stem-loop with SmpB. tmRNA is encoded by the ssrA gene; the 2 termini fold to resemble tRNA(Ala) and it encodes a 'tag peptide', a short internal open reading frame. During trans-translation Ala-aminoacylated tmRNA acts like a tRNA, entering the A-site of stalled ribosomes, displacing the stalled mRNA. The ribosome then switches to translate the ORF on the tmRNA; the nascent peptide is terminated with the 'tag peptide' encoded by the tmRNA and targeted for degradation. The ribosome is freed to recommence translation, which seems to be the essential function of trans-translation. In Azoarcus sp. (strain BH72), this protein is SsrA-binding protein.